The chain runs to 318 residues: MDQDALISKEDSEVEREASGGRESLSDVIGFLDAVLSSEPTDIGGDRSWLHNTINTLQRPGSTHRAKGEGEGEVSTSSTQDNRSGEESRVSGGTSEPEAEAHARNVDKQNIHWATGRGASTDSVPQDLGNGRDSGILEDPPNEGGYPRSGAEDENREMAANPDKRGEDQAEGLPEEIRRSAPLPDEGEGRADNNGRGVESGSPHSARVTGVLVIPSPELEEAVLQRNKRRPANSGSRSLTPVVVPSTRSPPPDHDNSTRSPPRKPPTTQDEHTNPRNTPAVRIKDRRPPTGTRSAPDRPTDGYPTHPGPETDATKKGA.

2 disordered regions span residues 1-24 (MDQD…GRES) and 38-318 (SEPT…KKGA). Basic and acidic residues predominate over residues 7-20 (ISKEDSEVEREASG). Residues 50–61 (LHNTINTLQRPG) show a composition bias toward polar residues. 2 stretches are compositionally biased toward basic and acidic residues: residues 99–110 (AEAHARNVDKQN) and 150–168 (GAED…RGED). Ser249, Ser257, and Ser260 each carry phosphoserine; by host.

This is Protein W (P/V/C) from Sendai virus (strain Hamamatsu) (SeV).